The sequence spans 357 residues: Large ribosomal subunit protein mL45 (357 aa).

The tract at residues 333–357 (EAKALPLRTTEKLEEAKKEKEQQEI) is disordered. Positions 341 to 357 (TTEKLEEAKKEKEQQEI) are enriched in basic and acidic residues.

The protein belongs to the mitochondrion-specific ribosomal protein mL45 family.

The protein resides in the mitochondrion. The sequence is that of Large ribosomal subunit protein mL45 (mrpl-45) from Caenorhabditis elegans.